The sequence spans 215 residues: Phosphatidylserine decarboxylase proenzyme (215 aa).

Residue Ser-185 is the Schiff-base intermediate with substrate; via pyruvic acid of the active site. Position 185 is a pyruvic acid (Ser); by autocatalysis (Ser-185).

It belongs to the phosphatidylserine decarboxylase family. PSD-A subfamily. As to quaternary structure, heterodimer of a large membrane-associated beta subunit and a small pyruvoyl-containing alpha subunit. Requires pyruvate as cofactor. Post-translationally, is synthesized initially as an inactive proenzyme. Formation of the active enzyme involves a self-maturation process in which the active site pyruvoyl group is generated from an internal serine residue via an autocatalytic post-translational modification. Two non-identical subunits are generated from the proenzyme in this reaction, and the pyruvate is formed at the N-terminus of the alpha chain, which is derived from the carboxyl end of the proenzyme. The post-translation cleavage follows an unusual pathway, termed non-hydrolytic serinolysis, in which the side chain hydroxyl group of the serine supplies its oxygen atom to form the C-terminus of the beta chain, while the remainder of the serine residue undergoes an oxidative deamination to produce ammonia and the pyruvoyl prosthetic group on the alpha chain.

It localises to the cell membrane. It catalyses the reaction a 1,2-diacyl-sn-glycero-3-phospho-L-serine + H(+) = a 1,2-diacyl-sn-glycero-3-phosphoethanolamine + CO2. The protein operates within phospholipid metabolism; phosphatidylethanolamine biosynthesis; phosphatidylethanolamine from CDP-diacylglycerol: step 2/2. Its function is as follows. Catalyzes the formation of phosphatidylethanolamine (PtdEtn) from phosphatidylserine (PtdSer). In Streptomyces griseus subsp. griseus (strain JCM 4626 / CBS 651.72 / NBRC 13350 / KCC S-0626 / ISP 5235), this protein is Phosphatidylserine decarboxylase proenzyme.